A 1049-amino-acid polypeptide reads, in one-letter code: Cellulose synthase A catalytic subunit 4 [UDP-forming] (1049 aa).

Topologically, residues 1 to 215 (MEPNTMASFD…ISSSKISPYR (215 aa)) are cytoplasmic. Zn(2+) is bound by residues C23, C26, C42, C45, C50, C53, C65, and C68. The segment at 23–69 (CKVCGDEVKDDDNGQTFVACHVCVYPVCKPCYEYERSNGNKCCPQCN) adopts an RING-type; degenerate zinc-finger fold. The disordered stretch occupies residues 76-98 (KGSPKIAGDEENNGPDDSDDELN). Positions 84 to 96 (DEENNGPDDSDDE) are enriched in acidic residues. The residue at position 135 (S135) is a Phosphoserine. The chain crosses the membrane as a helical span at residues 216–236 (IVIVLRLVILVFFFRFRILTP). Topologically, residues 237-239 (AKD) are extracellular. Residues 240-260 (AYPLWLISVICEIWFALSWIL) form a helical membrane-spanning segment. Residues 261–831 (DQFPKWFPIN…INTIVYPFTS (571 aa)) are Cytoplasmic-facing. Residues S299, K305, E306, and D335 each contribute to the UDP-alpha-D-glucose site. Residue D335 is part of the active site. Residues 389–416 (VKDRRAMKREYEEFKVRINALVAKAQKK) are a coiled coil. K476 contributes to the UDP-alpha-D-glucose binding site. Residues K477 and D501 each contribute to the Mn(2+) site. D748 is an active-site residue. The chain crosses the membrane as a helical span at residues 832 to 852 (IPLLAYCTIPAVCLLTGKFII). Topologically, residues 853–857 (PTINN) are extracellular. Residues 858 to 878 (FASIWFLALFLSIIATAILEL) form a helical membrane-spanning segment. Over 879–895 (RWSGVSINDLWRNEQFW) the chain is Cytoplasmic. A helical membrane pass occupies residues 896-916 (VIGGVSAHLFAVFQGLLKVLF). Residues 917-945 (GVDTNFTVTSKGASDEADEFGDLYLFKWT) are Extracellular-facing. N-linked (GlcNAc...) asparagine glycosylation is present at N921. A helical membrane pass occupies residues 946-966 (TLLIPPTTLIILNMVGVVAGV). At 967 to 977 (SDAINNGYGSW) the chain is on the cytoplasmic side. Residues 978 to 998 (GPLFGKLFFAFWVIVHLYPFL) form a helical membrane-spanning segment. Over 999 to 1007 (KGLMGRQNR) the chain is Extracellular. Residues 1008-1028 (TPTIVVLWSILLASIFSLVWV) traverse the membrane as a helical segment. Topologically, residues 1029-1049 (RIDPFLPKQTGPLLKQCGVDC) are cytoplasmic.

The protein belongs to the glycosyltransferase 2 family. Plant cellulose synthase subfamily. In terms of assembly, interacts with CESA7 and CESA8. Assembly with CESA7 and CESA8 is required for functional complex and localization in secondary cell wall deposition sites. Interacts with STL1 and STL2, but not with GOT1. Zn(2+) is required as a cofactor. Mn(2+) serves as cofactor. Post-translationally, S-acylated. In terms of tissue distribution, confined to secondary cell wall developing tissues such as xylems and interfascicular regions. Expressed in roots, hypocotyls, leaves, inflorescences and flowers.

The protein resides in the cell membrane. It carries out the reaction [(1-&gt;4)-beta-D-glucosyl](n) + UDP-alpha-D-glucose = [(1-&gt;4)-beta-D-glucosyl](n+1) + UDP + H(+). The protein operates within glycan metabolism; plant cellulose biosynthesis. Functionally, catalytic subunit of cellulose synthase terminal complexes ('rosettes'), required for beta-1,4-glucan microfibril crystallization, a major mechanism of the cell wall formation. Involved in the secondary cell wall formation. Required for the xylem cell wall thickening. This is Cellulose synthase A catalytic subunit 4 [UDP-forming] from Arabidopsis thaliana (Mouse-ear cress).